The primary structure comprises 291 residues: Pantothenate synthetase (291 aa).

Position 30 to 37 (M30 to H37) interacts with ATP. H37 (proton donor) is an active-site residue. Q61 is a (R)-pantoate binding site. Q61 is a beta-alanine binding site. ATP is bound at residue G147 to D150. Q153 serves as a coordination point for (R)-pantoate. Residues V176 and L184 to R187 contribute to the ATP site.

This sequence belongs to the pantothenate synthetase family. Homodimer.

The protein resides in the cytoplasm. It carries out the reaction (R)-pantoate + beta-alanine + ATP = (R)-pantothenate + AMP + diphosphate + H(+). It participates in cofactor biosynthesis; (R)-pantothenate biosynthesis; (R)-pantothenate from (R)-pantoate and beta-alanine: step 1/1. Its function is as follows. Catalyzes the condensation of pantoate with beta-alanine in an ATP-dependent reaction via a pantoyl-adenylate intermediate. The protein is Pantothenate synthetase of Rhizobium rhizogenes (strain K84 / ATCC BAA-868) (Agrobacterium radiobacter).